The chain runs to 953 residues: Isoleucine--tRNA ligase (953 aa).

The short motif at 57–67 is the 'HIGH' region element; sequence PYANGDIHIGH. L-isoleucyl-5'-AMP is bound at residue glutamate 582. Positions 623 to 627 match the 'KMSKS' region motif; it reads KMSKS. Position 626 (lysine 626) interacts with ATP. Cysteine 916, cysteine 919, cysteine 936, and cysteine 939 together coordinate Zn(2+).

The protein belongs to the class-I aminoacyl-tRNA synthetase family. IleS type 1 subfamily. In terms of assembly, monomer. The cofactor is Zn(2+).

It is found in the cytoplasm. It carries out the reaction tRNA(Ile) + L-isoleucine + ATP = L-isoleucyl-tRNA(Ile) + AMP + diphosphate. Catalyzes the attachment of isoleucine to tRNA(Ile). As IleRS can inadvertently accommodate and process structurally similar amino acids such as valine, to avoid such errors it has two additional distinct tRNA(Ile)-dependent editing activities. One activity is designated as 'pretransfer' editing and involves the hydrolysis of activated Val-AMP. The other activity is designated 'posttransfer' editing and involves deacylation of mischarged Val-tRNA(Ile). The protein is Isoleucine--tRNA ligase of Bordetella petrii (strain ATCC BAA-461 / DSM 12804 / CCUG 43448).